Consider the following 975-residue polypeptide: Aminopeptidase N (975 aa).

Residues 1-11 (MAKGFYISKAL) lie on the Cytoplasmic side of the membrane. Residues 12-32 (GILAIVLGIAAVSTIIALSVV) traverse the membrane as a helical; Signal-anchor for type II membrane protein segment. The tract at residues 33-74 (YAQEKNKNAESSPVSSPVSSPVSSPVSPTNPSTTAATTLAQS) is cytosolic Ser/Thr-rich junction. The Extracellular segment spans residues 33–975 (YAQEKNKNAE…VLQWFRENSQ (943 aa)). The segment at 41–68 (AESSPVSSPVSSPVSSPVSPTNPSTTAA) is disordered. Low complexity predominate over residues 43–59 (SSPVSSPVSSPVSSPVS). Positions 75-975 (KPWNHYRLPK…VLQWFRENSQ (901 aa)) are metalloprotease. Residue N134 is glycosylated (N-linked (GlcNAc...) asparagine). A Sulfotyrosine modification is found at Y182. 2 N-linked (GlcNAc...) asparagine glycosylation sites follow: N240 and N271. 358–362 (GAMEN) provides a ligand contact to substrate. A Zn(2+)-binding site is contributed by H394. Residue E395 is the Proton acceptor of the active site. Zn(2+) is bound by residues H398 and E417. Residues Y425 and Y430 each carry the sulfotyrosine modification. N533, N580, N633, N689, and N747 each carry an N-linked (GlcNAc...) asparagine glycan. 2 disulfide bridges follow: C769/C776 and C806/C842. The N-linked (GlcNAc...) asparagine glycan is linked to N826.

The protein belongs to the peptidase M1 family. As to quaternary structure, (Microbial infection) Interacts with CCoV spike glycoprotein. Homodimer. Interacts with SLC6A19. It depends on Zn(2+) as a cofactor. Sulfated. Post-translationally, N- and O-glycosylated. In terms of processing, may undergo proteolysis and give rise to a soluble form.

Its subcellular location is the cell membrane. It catalyses the reaction Release of an N-terminal amino acid, Xaa-|-Yaa- from a peptide, amide or arylamide. Xaa is preferably Ala, but may be most amino acids including Pro (slow action). When a terminal hydrophobic residue is followed by a prolyl residue, the two may be released as an intact Xaa-Pro dipeptide.. Its function is as follows. Broad specificity aminopeptidase which plays a role in the final digestion of peptides generated from hydrolysis of proteins by gastric and pancreatic proteases. Also involved in the processing of various peptides including peptide hormones, such as angiotensin III and IV, neuropeptides, and chemokines. May also be involved the cleavage of peptides bound to major histocompatibility complex class II molecules of antigen presenting cells. May have a role in angiogenesis and promote cholesterol crystallization. May have a role in amino acid transport by acting as binding partner of amino acid transporter SLC6A19 and regulating its activity. (Microbial infection) Probable receptor for canine coronavirus (CCoV). The protein is Aminopeptidase N (ANPEP) of Canis lupus familiaris (Dog).